The following is a 543-amino-acid chain: Sensor histidine kinase DcuS (543 aa).

The Cytoplasmic segment spans residues Met1–Thr20. The chain crosses the membrane as a helical span at residues Val21 to Phe41. Topologically, residues Ser42–Trp181 are periplasmic. Residues Arg107 to His110, Lys121, Gly140 to Leu142, and Arg147 contribute to the (R)-malate site. A helical transmembrane segment spans residues Ser182–Val202. At Lys203–Arg543 the chain is on the cytoplasmic side. The PAS domain maps to Leu212–Asp323. A Histidine kinase domain is found at Glu346–Gly538. His349 is modified (phosphohistidine; by autocatalysis).

In terms of assembly, homodimer. Post-translationally, autophosphorylated. The phosphoryl group is rapidly transferred to DcuR.

Its subcellular location is the cell inner membrane. The catalysed reaction is ATP + protein L-histidine = ADP + protein N-phospho-L-histidine.. In terms of biological role, member of the two-component regulatory system DcuR/DcuS. Involved in the C4-dicarboxylate-stimulated regulation of the genes encoding the anaerobic fumarate respiratory system (frdABCD; nuoAN; dcuB; sdhCDAB; etc.). Weakly regulates the aerobic C4-dicarboxylate transporter dctA. Activates DcuR by phosphorylation. In Escherichia coli O157:H7, this protein is Sensor histidine kinase DcuS (dcuS).